Here is a 448-residue protein sequence, read N- to C-terminus: Phosphoglucosamine mutase (448 aa).

Ser99 serves as the catalytic Phosphoserine intermediate. Mg(2+) is bound by residues Ser99, Asp239, Asp241, and Asp243. At Ser99 the chain carries Phosphoserine.

It belongs to the phosphohexose mutase family. Requires Mg(2+) as cofactor. Activated by phosphorylation.

The enzyme catalyses alpha-D-glucosamine 1-phosphate = D-glucosamine 6-phosphate. In terms of biological role, catalyzes the conversion of glucosamine-6-phosphate to glucosamine-1-phosphate. The protein is Phosphoglucosamine mutase of Lachnoclostridium phytofermentans (strain ATCC 700394 / DSM 18823 / ISDg) (Clostridium phytofermentans).